The chain runs to 193 residues: CDP-diacylglycerol--glycerol-3-phosphate 3-phosphatidyltransferase (193 aa).

4 helical membrane-spanning segments follow: residues 8–28 (ITLA…APFD), 39–59 (IPVA…TDWV), 88–108 (AALI…IVII), and 157–177 (LVSF…TVVS).

The protein belongs to the CDP-alcohol phosphatidyltransferase class-I family.

It is found in the cell membrane. It carries out the reaction a CDP-1,2-diacyl-sn-glycerol + sn-glycerol 3-phosphate = a 1,2-diacyl-sn-glycero-3-phospho-(1'-sn-glycero-3'-phosphate) + CMP + H(+). Its pathway is phospholipid metabolism; phosphatidylglycerol biosynthesis; phosphatidylglycerol from CDP-diacylglycerol: step 1/2. In terms of biological role, this protein catalyzes the committed step to the synthesis of the acidic phospholipids. This Bacillus subtilis (strain 168) protein is CDP-diacylglycerol--glycerol-3-phosphate 3-phosphatidyltransferase (pgsA).